The chain runs to 42 residues: Potassium channel toxin gamma-KTx 1.6 (42 aa).

4 cysteine pairs are disulfide-bonded: Cys-5–Cys-23, Cys-11–Cys-34, Cys-20–Cys-39, and Cys-24–Cys-41.

It belongs to the ergtoxin family. Gamma-KTx 1 subfamily. Expressed by the venom gland.

The protein resides in the secreted. In terms of biological role, blocks Kv11/ERG potassium channels. The protein is Potassium channel toxin gamma-KTx 1.6 of Centruroides exilicauda (Bark scorpion).